The sequence spans 112 residues: uncharacterized protein (112 aa).

In terms of domain architecture, HTH cro/C1-type spans 6–60 (LRQLRKAHKLTMEQLAEKIGIAKSSYGGYEAESKKPPLDKLVILARLYDVSVDYI). Residues 17–36 (MEQLAEKIGIAKSSYGGYEA) constitute a DNA-binding region (H-T-H motif).

This is an uncharacterized protein from Bacillus subtilis (strain 168).